A 305-amino-acid polypeptide reads, in one-letter code: tRNA dimethylallyltransferase (305 aa).

11-18 lines the ATP pocket; the sequence is GPTAVGKT. Residue 13–18 participates in substrate binding; sequence TAVGKT. An interaction with substrate tRNA region spans residues 36–39; it reads DSMQ.

Belongs to the IPP transferase family. As to quaternary structure, monomer. The cofactor is Mg(2+).

It catalyses the reaction adenosine(37) in tRNA + dimethylallyl diphosphate = N(6)-dimethylallyladenosine(37) in tRNA + diphosphate. Catalyzes the transfer of a dimethylallyl group onto the adenine at position 37 in tRNAs that read codons beginning with uridine, leading to the formation of N6-(dimethylallyl)adenosine (i(6)A). This chain is tRNA dimethylallyltransferase, found in Listeria monocytogenes serotype 4a (strain HCC23).